A 260-amino-acid polypeptide reads, in one-letter code: Indole-3-glycerol phosphate synthase (260 aa).

It belongs to the TrpC family.

The catalysed reaction is 1-(2-carboxyphenylamino)-1-deoxy-D-ribulose 5-phosphate + H(+) = (1S,2R)-1-C-(indol-3-yl)glycerol 3-phosphate + CO2 + H2O. It functions in the pathway amino-acid biosynthesis; L-tryptophan biosynthesis; L-tryptophan from chorismate: step 4/5. The chain is Indole-3-glycerol phosphate synthase from Nocardioides sp. (strain ATCC BAA-499 / JS614).